Here is a 175-residue protein sequence, read N- to C-terminus: Large ribosomal subunit protein uL10 (175 aa).

Belongs to the universal ribosomal protein uL10 family. In terms of assembly, part of the ribosomal stalk of the 50S ribosomal subunit. The N-terminus interacts with L11 and the large rRNA to form the base of the stalk. The C-terminus forms an elongated spine to which L12 dimers bind in a sequential fashion forming a multimeric L10(L12)X complex.

Functionally, forms part of the ribosomal stalk, playing a central role in the interaction of the ribosome with GTP-bound translation factors. This chain is Large ribosomal subunit protein uL10, found in Prochlorococcus marinus (strain MIT 9515).